We begin with the raw amino-acid sequence, 146 residues long: D-aminoacyl-tRNA deacylase (146 aa).

Positions 137 to 138 (GP) match the Gly-cisPro motif, important for rejection of L-amino acids motif.

Belongs to the DTD family. As to quaternary structure, homodimer.

The protein resides in the cytoplasm. It carries out the reaction glycyl-tRNA(Ala) + H2O = tRNA(Ala) + glycine + H(+). It catalyses the reaction a D-aminoacyl-tRNA + H2O = a tRNA + a D-alpha-amino acid + H(+). An aminoacyl-tRNA editing enzyme that deacylates mischarged D-aminoacyl-tRNAs. Also deacylates mischarged glycyl-tRNA(Ala), protecting cells against glycine mischarging by AlaRS. Acts via tRNA-based rather than protein-based catalysis; rejects L-amino acids rather than detecting D-amino acids in the active site. By recycling D-aminoacyl-tRNA to D-amino acids and free tRNA molecules, this enzyme counteracts the toxicity associated with the formation of D-aminoacyl-tRNA entities in vivo and helps enforce protein L-homochirality. This is D-aminoacyl-tRNA deacylase from Bacillus cereus (strain G9842).